A 451-amino-acid chain; its full sequence is NADH-quinone oxidoreductase subunit D (451 aa).

The protein belongs to the complex I 49 kDa subunit family. In terms of assembly, NDH-1 is composed of 14 different subunits. Subunits NuoB, C, D, E, F, and G constitute the peripheral sector of the complex.

Its subcellular location is the cell membrane. It carries out the reaction a quinone + NADH + 5 H(+)(in) = a quinol + NAD(+) + 4 H(+)(out). Functionally, NDH-1 shuttles electrons from NADH, via FMN and iron-sulfur (Fe-S) centers, to quinones in the respiratory chain. The immediate electron acceptor for the enzyme in this species is believed to be a menaquinone. Couples the redox reaction to proton translocation (for every two electrons transferred, four hydrogen ions are translocated across the cytoplasmic membrane), and thus conserves the redox energy in a proton gradient. In Mycolicibacterium gilvum (strain PYR-GCK) (Mycobacterium gilvum (strain PYR-GCK)), this protein is NADH-quinone oxidoreductase subunit D.